Reading from the N-terminus, the 455-residue chain is DNA repair protein RadA (455 aa).

The C4-type zinc finger occupies 12–29 (CSECGSYSPKWLGQCPGC). 95–102 (GEPGIGKS) is a binding site for ATP. The RadA KNRFG motif signature appears at 252–256 (KNRFG). A lon-protease-like region spans residues 351-455 (DVFLSIAGGL…TIKDAVRLLQ (105 aa)).

The protein belongs to the RecA family. RadA subfamily.

DNA-dependent ATPase involved in processing of recombination intermediates, plays a role in repairing DNA breaks. Stimulates the branch migration of RecA-mediated strand transfer reactions, allowing the 3' invading strand to extend heteroduplex DNA faster. Binds ssDNA in the presence of ADP but not other nucleotides, has ATPase activity that is stimulated by ssDNA and various branched DNA structures, but inhibited by SSB. Does not have RecA's homology-searching function. This chain is DNA repair protein RadA, found in Chlamydia muridarum (strain MoPn / Nigg).